Here is a 211-residue protein sequence, read N- to C-terminus: uncharacterized protein (211 aa).

This is an uncharacterized protein from Acidianus convivator (ATV).